The following is an 83-amino-acid chain: Conotoxin Im22.1 (83 aa).

Residues 1 to 18 (MMMRVFIAMFFLLALVEA) form the signal peptide. Residues 19-26 (GWPRLYDK) constitute a propeptide that is removed on maturation.

This sequence belongs to the conotoxin E superfamily. Contain 4 disulfide bonds. As to expression, expressed by the venom duct.

It localises to the secreted. Functionally, probable neurotoxin. This is Conotoxin Im22.1 from Conus imperialis (Imperial cone).